A 259-amino-acid chain; its full sequence is DNA repair protein RecO (259 aa).

Belongs to the RecO family.

Involved in DNA repair and RecF pathway recombination. In Leuconostoc mesenteroides subsp. mesenteroides (strain ATCC 8293 / DSM 20343 / BCRC 11652 / CCM 1803 / JCM 6124 / NCDO 523 / NBRC 100496 / NCIMB 8023 / NCTC 12954 / NRRL B-1118 / 37Y), this protein is DNA repair protein RecO.